The following is a 478-amino-acid chain: tRNA-2-methylthio-N(6)-dimethylallyladenosine synthase (478 aa).

The region spanning 39–157 (KLVFTQTFGC…FPQLLTESIN (119 aa)) is the MTTase N-terminal domain. [4Fe-4S] cluster is bound by residues Cys-48, Cys-84, Cys-118, Cys-194, Cys-198, and Cys-201. Positions 180–410 (RKFELKAFVN…LEAVNRISAE (231 aa)) constitute a Radical SAM core domain. The TRAM domain maps to 410 to 477 (EINDGYKDRI…TFSLNGILVN (68 aa)).

Belongs to the methylthiotransferase family. MiaB subfamily. Monomer. Requires [4Fe-4S] cluster as cofactor.

Its subcellular location is the cytoplasm. It carries out the reaction N(6)-dimethylallyladenosine(37) in tRNA + (sulfur carrier)-SH + AH2 + 2 S-adenosyl-L-methionine = 2-methylsulfanyl-N(6)-dimethylallyladenosine(37) in tRNA + (sulfur carrier)-H + 5'-deoxyadenosine + L-methionine + A + S-adenosyl-L-homocysteine + 2 H(+). Catalyzes the methylthiolation of N6-(dimethylallyl)adenosine (i(6)A), leading to the formation of 2-methylthio-N6-(dimethylallyl)adenosine (ms(2)i(6)A) at position 37 in tRNAs that read codons beginning with uridine. This chain is tRNA-2-methylthio-N(6)-dimethylallyladenosine synthase, found in Clostridioides difficile (strain 630) (Peptoclostridium difficile).